A 311-amino-acid chain; its full sequence is Putative ribose-phosphate pyrophosphokinase 2 (311 aa).

ATP is bound by residues 38-40 (DGE) and 97-98 (RQ). Residues His-131 and Asp-171 each coordinate Mg(2+). Asp-219 serves as a coordination point for D-ribose 5-phosphate.

It belongs to the ribose-phosphate pyrophosphokinase family. Class I subfamily. Homohexamer. Mg(2+) is required as a cofactor.

It is found in the cytoplasm. The enzyme catalyses D-ribose 5-phosphate + ATP = 5-phospho-alpha-D-ribose 1-diphosphate + AMP + H(+). The protein operates within metabolic intermediate biosynthesis; 5-phospho-alpha-D-ribose 1-diphosphate biosynthesis; 5-phospho-alpha-D-ribose 1-diphosphate from D-ribose 5-phosphate (route I): step 1/1. In terms of biological role, involved in the biosynthesis of the central metabolite phospho-alpha-D-ribosyl-1-pyrophosphate (PRPP) via the transfer of pyrophosphoryl group from ATP to 1-hydroxyl of ribose-5-phosphate (Rib-5-P). In Listeria monocytogenes serotype 4b (strain F2365), this protein is Putative ribose-phosphate pyrophosphokinase 2.